The primary structure comprises 381 residues: MKAVHFGAGNIGRGFIGLQLVKSGYDVCFIDVNAEVVEALKTRGAYTVGYAAEEAAVEEVSRVTALNSQTEAERVVEAIATADVVTTAVGPTLLARIAPLLAEGLKQRTTTQNVFVIACENMIEGSSHLQQEVMHYLESTPGNVFFPNAAVDRIVPLQHHEDPLYVEVEPFFEWVIETKALPDDYPVFEGVTYVADITPFIERKLFTVNTGHAIASYLGALFGKETIAESLQDVRVRRGVQSALYETGWLLLEKYGFDPKDHSAYIQKNIKRFENPRIHDEIVRVARSPIRKLGPRDRLVKPARELMDRGIEANGLALGIAAALTYSDPNYSEYSELNTFIEQNGIQETVATYLGLEADERLSQLIVSQYEQMHPMSDSIA.

Position 3 to 14 (3 to 14 (AVHFGAGNIGRG)) interacts with NAD(+).

The protein belongs to the mannitol dehydrogenase family.

It catalyses the reaction D-mannitol 1-phosphate + NAD(+) = beta-D-fructose 6-phosphate + NADH + H(+). The polypeptide is Mannitol-1-phosphate 5-dehydrogenase (Exiguobacterium sibiricum (strain DSM 17290 / CCUG 55495 / CIP 109462 / JCM 13490 / 255-15)).